Consider the following 61-residue polypeptide: Short neurotoxin 1 (61 aa).

Disulfide bonds link Cys3-Cys23, Cys17-Cys40, Cys42-Cys53, and Cys54-Cys59.

This sequence belongs to the three-finger toxin family. Short-chain subfamily. Type I alpha-neurotoxin sub-subfamily. Expressed by the venom gland.

The protein resides in the secreted. Its function is as follows. Binds to muscle nicotinic acetylcholine receptor (nAChR) and inhibit acetylcholine from binding to the receptor, thereby impairing neuromuscular transmission. This is Short neurotoxin 1 from Naja annulata annulata (Banded water cobra).